The following is a 201-amino-acid chain: MELVITGSNNKVSVSDAVFGREFSEDLVHQVVVAYRNAGRAGTKAQKTRSEVAGTTKKSKKQKGGGARHGALTAPIFVGGGVTFAAKPRSFEQKVNRKMYRAAICAIFSELNRQGRLMIVDSFDIEATKTKGLIEKLKGMDVGKRPLIVTEEASEHLYLSARNLPYVQVRDVQGLDPVALVGADTVVITADAVKKVEEWLA.

The interval 44-68 (KAQKTRSEVAGTTKKSKKQKGGGAR) is disordered.

The protein belongs to the universal ribosomal protein uL4 family. Part of the 50S ribosomal subunit.

In terms of biological role, one of the primary rRNA binding proteins, this protein initially binds near the 5'-end of the 23S rRNA. It is important during the early stages of 50S assembly. It makes multiple contacts with different domains of the 23S rRNA in the assembled 50S subunit and ribosome. Forms part of the polypeptide exit tunnel. This chain is Large ribosomal subunit protein uL4, found in Xanthomonas campestris pv. campestris (strain 8004).